We begin with the raw amino-acid sequence, 205 residues long: Small ribosomal subunit protein uS4 (205 aa).

The disordered stretch occupies residues 17 to 46 (ENIWGRPKSPVNKREYGPGQHGQRRKGKLS). The S4 RNA-binding domain occupies 94 to 157 (SRLDAVVYRA…KQLVIVLESV (64 aa)).

It belongs to the universal ribosomal protein uS4 family. Part of the 30S ribosomal subunit. Contacts protein S5. The interaction surface between S4 and S5 is involved in control of translational fidelity.

Its function is as follows. One of the primary rRNA binding proteins, it binds directly to 16S rRNA where it nucleates assembly of the body of the 30S subunit. In terms of biological role, with S5 and S12 plays an important role in translational accuracy. The sequence is that of Small ribosomal subunit protein uS4 from Mesorhizobium japonicum (strain LMG 29417 / CECT 9101 / MAFF 303099) (Mesorhizobium loti (strain MAFF 303099)).